A 193-amino-acid polypeptide reads, in one-letter code: Pyridoxal 5'-phosphate synthase subunit PdxT (193 aa).

48–50 (GES) is a binding site for L-glutamine. C80 functions as the Nucleophile in the catalytic mechanism. Residues R112 and 140-141 (IR) each bind L-glutamine. Catalysis depends on charge relay system residues H176 and E178.

It belongs to the glutaminase PdxT/SNO family. In terms of assembly, in the presence of PdxS, forms a dodecamer of heterodimers. Only shows activity in the heterodimer.

The catalysed reaction is aldehydo-D-ribose 5-phosphate + D-glyceraldehyde 3-phosphate + L-glutamine = pyridoxal 5'-phosphate + L-glutamate + phosphate + 3 H2O + H(+). It carries out the reaction L-glutamine + H2O = L-glutamate + NH4(+). It functions in the pathway cofactor biosynthesis; pyridoxal 5'-phosphate biosynthesis. In terms of biological role, catalyzes the hydrolysis of glutamine to glutamate and ammonia as part of the biosynthesis of pyridoxal 5'-phosphate. The resulting ammonia molecule is channeled to the active site of PdxS. The sequence is that of Pyridoxal 5'-phosphate synthase subunit PdxT from Mycolicibacterium smegmatis (strain ATCC 700084 / mc(2)155) (Mycobacterium smegmatis).